We begin with the raw amino-acid sequence, 593 residues long: UvrABC system protein C (593 aa).

The GIY-YIG domain maps to 17 to 94 (MEPGCYLMKD…IKQYQPRYNI (78 aa)). Residues 199 to 234 (KTILKSLEERMLTASESLDFERAKEYRDLIQHIQNL) form the UVR domain.

It belongs to the UvrC family. As to quaternary structure, interacts with UvrB in an incision complex.

It is found in the cytoplasm. In terms of biological role, the UvrABC repair system catalyzes the recognition and processing of DNA lesions. UvrC both incises the 5' and 3' sides of the lesion. The N-terminal half is responsible for the 3' incision and the C-terminal half is responsible for the 5' incision. The sequence is that of UvrABC system protein C from Staphylococcus aureus (strain MSSA476).